Here is a 628-residue protein sequence, read N- to C-terminus: MVNPPQPRQMPKSPRLSTSTSSGPSAVPNLLGSPRPSPPQLQHQPSSASTSSTTSTATTGGSISATAPGSTQHYLHHHPSRKTSIVEILSSPPPLPTDPNDPIHQLSLSRHASTSSNKSSSQSIAPGSTAITNHAFSLVDWSEIPLTELTESNKLISIHSSHSVQSAFETLLKNNLTSVPVSISKSDPHDLTNCLTFDYSDLNTYLLLIMNKINYSELNVDDIGDPNISPQERHEFVTQTISKAKRGEEVPVEFIIKLHPKNPFIKFNETDTLFSVMETLGNGVHRIAITNEEGNKITGILSQRRLIKYMWENARRFPSLDFYLTSTLQDLKIGSSNPITIYEDQMLIEALHKMFNERVSSLAVIDRSRTLIGNISIVDVKNVTSSKNSHLLFKSVLNFISYNLSQKGIEEGQDQFPIFHVNNQTSLGRVIAKLVATQSHRLWIVDSSRQASSMSSASASAPNSGMNNGVTVGYPAPADSSITDKAEEVEASSMSSPQLNAAAAAAAAVATGAPTTATSAQPDFSYTSGTGKLVGVVTLTDILGLFATSKGRRTDPQAARNQRRRSSTSTTRSSIDSALSAEGILPSGSAIIGSSNAANTGRRGSVEVSSDVFRKSYTKAQENAFSKE.

The segment at M1–P126 is disordered. A compositionally biased stretch (polar residues) spans R15–P24. Composition is skewed to low complexity over residues Q40–T71 and S109–S123. 2 consecutive CBS domains span residues L258 to S319 and G334 to L392. The interval G551 to S609 is disordered. Positions S587–N599 are enriched in low complexity.

The protein belongs to the SDS23 family.

The protein resides in the cytoplasm. Its subcellular location is the nucleus. Functionally, involved in DNA replication and cell separation. The protein is Protein SDS23 (SDS24) of Candida albicans (strain SC5314 / ATCC MYA-2876) (Yeast).